Reading from the N-terminus, the 146-residue chain is Tyrosinase cofactor (146 aa).

Positions 1 to 30 (MPELTRRRALGAAAVVAAGVPLVALPAARA) form a signal peptide, tat-type signal. The disordered stretch occupies residues 65–85 (RTVTDGGGHHGGGHGGDGHGG). Over residues 69 to 85 (DGGGHHGGGHGGDGHGG) the composition is skewed to gly residues.

Belongs to the melC1 family. In terms of processing, predicted to be exported by the Tat system. The position of the signal peptide cleavage has not been experimentally proven.

Its function is as follows. This protein may function to deliver copper to tyrosinase. The protein is Tyrosinase cofactor (melC1) of Streptomyces antibioticus.